The chain runs to 78 residues: Putative Fe(2+) transport protein A (78 aa).

The protein belongs to the FeoA family.

Functionally, might be involved in Fe(2+) ion uptake. The protein is Putative Fe(2+) transport protein A of Helicobacter pylori (strain J99 / ATCC 700824) (Campylobacter pylori J99).